A 77-amino-acid chain; its full sequence is Acyl carrier protein (77 aa).

The region spanning 1 to 76 is the Carrier domain; sequence MSIEERVKKI…SAIDYVTKAN (76 aa). Residue serine 36 is modified to O-(pantetheine 4'-phosphoryl)serine.

It belongs to the acyl carrier protein (ACP) family. In terms of processing, 4'-phosphopantetheine is transferred from CoA to a specific serine of apo-ACP by AcpS. This modification is essential for activity because fatty acids are bound in thioester linkage to the sulfhydryl of the prosthetic group.

It is found in the cytoplasm. Its pathway is lipid metabolism; fatty acid biosynthesis. Carrier of the growing fatty acid chain in fatty acid biosynthesis. The chain is Acyl carrier protein from Actinobacillus pleuropneumoniae serotype 5b (strain L20).